Reading from the N-terminus, the 498-residue chain is NADH-quinone oxidoreductase subunit N 2 (498 aa).

Helical transmembrane passes span Val-19–Phe-39, Ile-47–Trp-67, Tyr-83–Leu-103, Ser-114–Ala-134, Leu-136–Phe-156, Leu-171–Ala-191, Ile-215–Ala-235, Pro-249–Leu-269, Ile-282–Ala-302, Ile-317–Ala-337, Val-345–Ala-365, Leu-389–Phe-409, Trp-420–Phe-440, and Ala-468–Ile-488.

This sequence belongs to the complex I subunit 2 family. As to quaternary structure, NDH-1 is composed of 14 different subunits. Subunits NuoA, H, J, K, L, M, N constitute the membrane sector of the complex.

It localises to the cell membrane. The catalysed reaction is a quinone + NADH + 5 H(+)(in) = a quinol + NAD(+) + 4 H(+)(out). Functionally, NDH-1 shuttles electrons from NADH, via FMN and iron-sulfur (Fe-S) centers, to quinones in the respiratory chain. The immediate electron acceptor for the enzyme in this species is believed to be ubiquinone. Couples the redox reaction to proton translocation (for every two electrons transferred, four hydrogen ions are translocated across the cytoplasmic membrane), and thus conserves the redox energy in a proton gradient. The polypeptide is NADH-quinone oxidoreductase subunit N 2 (Roseiflexus castenholzii (strain DSM 13941 / HLO8)).